The sequence spans 91 residues: Ribonuclease P protein component 4 (91 aa).

Residues Cys55, Cys58, Cys78, and Cys81 each coordinate Zn(2+).

The protein belongs to the eukaryotic/archaeal RNase P protein component 4 family. As to quaternary structure, consists of a catalytic RNA component and at least 4-5 protein subunits. The cofactor is Zn(2+).

It is found in the cytoplasm. It carries out the reaction Endonucleolytic cleavage of RNA, removing 5'-extranucleotides from tRNA precursor.. In terms of biological role, part of ribonuclease P, a protein complex that generates mature tRNA molecules by cleaving their 5'-ends. The protein is Ribonuclease P protein component 4 of Thermoplasma acidophilum (strain ATCC 25905 / DSM 1728 / JCM 9062 / NBRC 15155 / AMRC-C165).